A 295-amino-acid chain; its full sequence is Pyrroline-5-carboxylate reductase (295 aa).

It belongs to the pyrroline-5-carboxylate reductase family.

It is found in the cytoplasm. The enzyme catalyses L-proline + NADP(+) = (S)-1-pyrroline-5-carboxylate + NADPH + 2 H(+). It carries out the reaction L-proline + NAD(+) = (S)-1-pyrroline-5-carboxylate + NADH + 2 H(+). It functions in the pathway amino-acid biosynthesis; L-proline biosynthesis; L-proline from L-glutamate 5-semialdehyde: step 1/1. Catalyzes the reduction of 1-pyrroline-5-carboxylate (PCA) to L-proline. The chain is Pyrroline-5-carboxylate reductase from Mycobacterium tuberculosis (strain CDC 1551 / Oshkosh).